The following is a 446-amino-acid chain: Plant intracellular Ras-group-related LRR protein 3 (446 aa).

Residues 65–100 are a coiled coil; it reads EACRAVVRLEETHDAYEALLQEAEGRLEAVYRSAME. The tract at residues 101 to 121 is disordered; sequence GKDLEEPDGRDESAAAAAGDD. 10 LRR repeats span residues 138–160, 161–184, 185–207, 208–230, 232–254, 255–277, 279–300, 301–324, 325–347, and 349–371; these read GKPVESVRLVDRQLRHLPEAFGR, IQGLRVLDVSRNQLEVIPDAIGGL, DHLEELRLASNALISLPDSIGLL, LNLRILNVGSNRLRSLPDSISKC, SLIELDASYNGLAYLPTNIGYEL, VNLRKLWVHMNKLRSLPSSICEM, SLYLLDAHFNELCGLPSAIGKL, SSLEILNLSSNFSDLKDLPASFGD, LLNLRELDLSNNQIHALPDNFGR, and DKLEKLNLEQNPLSMPPMEIVNK. Positions 372–384 match the GVYW motif; sequence GVDAVKEYMLQRW.

The protein belongs to the SHOC2 family. As to expression, widely expressed.

Leucine-rich repeat protein that likely mediates protein interactions, possibly in the context of signal transduction. The polypeptide is Plant intracellular Ras-group-related LRR protein 3 (IRL3) (Oryza sativa subsp. japonica (Rice)).